Consider the following 364-residue polypeptide: Histidinol-phosphate aminotransferase 1 (364 aa).

Lys-211 is subject to N6-(pyridoxal phosphate)lysine.

It belongs to the class-II pyridoxal-phosphate-dependent aminotransferase family. Histidinol-phosphate aminotransferase subfamily. In terms of assembly, homodimer. It depends on pyridoxal 5'-phosphate as a cofactor.

The enzyme catalyses L-histidinol phosphate + 2-oxoglutarate = 3-(imidazol-4-yl)-2-oxopropyl phosphate + L-glutamate. Its pathway is amino-acid biosynthesis; L-histidine biosynthesis; L-histidine from 5-phospho-alpha-D-ribose 1-diphosphate: step 7/9. The chain is Histidinol-phosphate aminotransferase 1 from Legionella pneumophila subsp. pneumophila (strain Philadelphia 1 / ATCC 33152 / DSM 7513).